Reading from the N-terminus, the 229-residue chain is Prolactin (229 aa).

Positions 1–30 (MDNKGWSLKGSLLFLLLLLSDLLLCKSVAS) are cleaved as a signal peptide. Cys34 and Cys41 are oxidised to a cystine. Position 56 is a phosphoserine (Ser56). An N-linked (GlcNAc...) asparagine glycan is attached at Asn61. 2 positions are modified to phosphoserine: Ser64 and Ser120. 2 disulfide bridges follow: Cys88–Cys204 and Cys221–Cys229.

Belongs to the somatotropin/prolactin family. As to quaternary structure, interacts with PRLR.

It localises to the secreted. In terms of biological role, prolactin acts primarily on the mammary gland by promoting lactation. The sequence is that of Prolactin (PRL) from Felis catus (Cat).